Here is a 650-residue protein sequence, read N- to C-terminus: Aminopeptidase B (650 aa).

298–302 (GGMEN) is a binding site for substrate. H325 contributes to the Zn(2+) binding site. E326 (proton acceptor) is an active-site residue. Zn(2+) contacts are provided by H329 and E348. K446 bears the N6-acetyllysine mark.

It belongs to the peptidase M1 family. In terms of assembly, monomer. It depends on Zn(2+) as a cofactor.

The protein resides in the secreted. It carries out the reaction Release of N-terminal Arg and Lys from oligopeptides when P1' is not Pro. Also acts on arylamides of Arg and Lys.. Exopeptidase which selectively removes arginine and/or lysine residues from the N-terminus of several peptide substrates including Arg(0)-Leu-enkephalin, Arg(0)-Met-enkephalin and Arg(-1)-Lys(0)-somatostatin-14. Can hydrolyze leukotriene A4 (LTA-4) into leukotriene B4 (LTB-4). This chain is Aminopeptidase B (Rnpep), found in Mus musculus (Mouse).